A 557-amino-acid polypeptide reads, in one-letter code: MAAQGFLLIATFLLVLMVLARPLGSGLARLINDIPLPGTAGVERILFRLPGVSDHEMNWKQYLCAILGLNMLGLAVLFFMLLGQHYLPLNPQQLPGLSWDLALNTAVNFVTNTNWQSYSGETTLSYFSQMAGLTVQNFLSAASGIAVIFAFIRAFTRQSMSTLGNAWVDLLRITLWVLVPVALLIALFLIQQGALQNFLPYQAVNTVEGAQQLLPMGPVASQEAIKMLGTNGGGFFNANSSHPFENPTALTNFVQMLAIFLIPTALCFAFGEVTGDRRQGRMLLWAMSVIFVICVGVVMWAEVQGNPHLLALGADSSINMEGKESRFGVLVSSLFAVVTTAASCGAVIAMHDSFTALGGMVPMWLMQIGEVVFGGVGSGLYGMMLFVLLAVFIAGLMIGRTPEYLGKKIDVREMKLTALAILVTPTLVLMGAALAMMTDAGRSAMLNPGPHGFSEVLYAVSSAANNNGSAFAGLSANSPFWNCLLAFCMFVGRFGVIIPVMAIAGSLVSKKSQPASSGTLPTHGPLFVGLLIGTVLLVGALTFIPALALGPVAEYLS.

The next 12 helical transmembrane spans lie at 5–25 (GFLL…PLGS), 63–83 (LCAI…MLLG), 132–152 (GLTV…FAFI), 170–190 (LLRI…LFLI), 253–273 (FVQM…FGEV), 283–303 (LLWA…WAEV), 329–349 (VLVS…AVIA), 356–376 (ALGG…FGGV), 379–399 (GLYG…LMIG), 416–436 (LTAL…ALAM), 484–504 (LLAF…MAIA), and 526–546 (LFVG…FIPA).

Belongs to the KdpA family. In terms of assembly, the system is composed of three essential subunits: KdpA, KdpB and KdpC.

The protein localises to the cell inner membrane. Part of the high-affinity ATP-driven potassium transport (or Kdp) system, which catalyzes the hydrolysis of ATP coupled with the electrogenic transport of potassium into the cytoplasm. This subunit binds the periplasmic potassium ions and delivers the ions to the membrane domain of KdpB through an intramembrane tunnel. The polypeptide is Potassium-transporting ATPase potassium-binding subunit (Shigella boydii serotype 18 (strain CDC 3083-94 / BS512)).